A 326-amino-acid polypeptide reads, in one-letter code: Ribosomal RNA small subunit methyltransferase H (326 aa).

S-adenosyl-L-methionine-binding positions include 45-47 (GGH), aspartate 65, aspartate 113, and glutamine 120. The interval 299–326 (PSAEEITRNPRSRSARLRAAERIAHDGR) is disordered. Positions 316 to 326 (RAAERIAHDGR) are enriched in basic and acidic residues.

The protein belongs to the methyltransferase superfamily. RsmH family.

The protein localises to the cytoplasm. It catalyses the reaction cytidine(1402) in 16S rRNA + S-adenosyl-L-methionine = N(4)-methylcytidine(1402) in 16S rRNA + S-adenosyl-L-homocysteine + H(+). Specifically methylates the N4 position of cytidine in position 1402 (C1402) of 16S rRNA. This is Ribosomal RNA small subunit methyltransferase H from Thermomicrobium roseum (strain ATCC 27502 / DSM 5159 / P-2).